Here is a 255-residue protein sequence, read N- to C-terminus: Protein N-terminal and lysine N-methyltransferase efm7 (255 aa).

The interval 1 to 25 (MADNDFEGFGIFEEPEGFRPSTPPP) is disordered. Residues Trp-58, 84–86 (GAG), Asp-106, Trp-137, and Ser-162 contribute to the S-adenosyl-L-methionine site.

Belongs to the class I-like SAM-binding methyltransferase superfamily. EFM7 family.

The protein resides in the cytoplasm. S-adenosyl-L-methionine-dependent protein methyltransferase that trimethylates the N-terminal glycine 'Gly-2' of elongation factor 1-alpha, before also catalyzing the mono- and dimethylation of 'Lys-3'. This chain is Protein N-terminal and lysine N-methyltransferase efm7, found in Schizosaccharomyces pombe (strain 972 / ATCC 24843) (Fission yeast).